The following is a 428-amino-acid chain: Spliceosome RNA helicase DDX39B (428 aa).

Residues 1–19 (MAENDVDNELLDYEDDEVE) are compositionally biased toward acidic residues. A disordered region spans residues 1–31 (MAENDVDNELLDYEDDEVETAAGGDGAEAPA). A2 is modified (N-acetylalanine). An N6-acetyllysine; alternate modification is found at K36. A Glycyl lysine isopeptide (Lys-Gly) (interchain with G-Cter in SUMO2); alternate cross-link involves residue K36. Phosphoserine occurs at positions 38 and 41. The short motif at 45 to 73 (SGFRDFLLKPELLRAIVDCGFEHPSEVQH) is the Q motif element. Residues 76–249 (IPQAILGMDV…RKFMQDPMEI (174 aa)) enclose the Helicase ATP-binding domain. 89 to 96 (AKSGMGKT) contributes to the ATP binding site. T172 bears the Phosphothreonine mark. The DECD box signature appears at 196–199 (DECD). The 162-residue stretch at 261-422 (GLQQYYVKLK…ELPDEIDISS (162 aa)) folds into the Helicase C-terminal domain.

The protein belongs to the DEAD box helicase family. DECD subfamily. As to quaternary structure, homodimer, and heterodimer with DDX39A. DDX39B interacts with the THO subcomplex to form the THO-DDX39B complex which multimerizes into a 28-subunit tetrameric assembly. Component of the transcription/export (TREX) complex at least composed of ALYREF/THOC4, DDX39B, SARNP/CIP29, CHTOP and the THO subcomplex; in the complex interacts with THOC2. THOC1-THOC2-THOC3-DDX39B subcomplex is sufficient for the interaction with export factor NXF1-NXT1. TREX seems to have a dynamic structure involving ATP-dependent remodeling. Within the TREX complex bridges ALYREF/THOC4 and the THO subcomplex, and, in a ATP-dependent manner, ALYREF/THOC4 and SARNP/CIP29. Component of the spliceosome. Interacts directly with U2AF2. Interacts with RBM8A, RNPS1 and SRRM1, FYTTD1/UIF, THOC1, MX1 and POLDIP3. Interacts with LUZP4. Interacts with SARNP/CIP29 (via the C-terminal domain); the interaction is direct and facilitates RNA binding of DDX39B. (Microbial infection) Interacts with human cytomegalovirus/HHV-5 protein UL69.

The protein resides in the nucleus. Its subcellular location is the nucleus speckle. The protein localises to the cytoplasm. The catalysed reaction is ATP + H2O = ADP + phosphate + H(+). Functionally, involved in nuclear export of spliced and unspliced mRNA. Component of the TREX complex which is thought to couple mRNA transcription, processing and nuclear export, and specifically associates with spliced mRNA and not with unspliced pre-mRNA. The TREX complex is recruited to spliced mRNAs by a transcription-independent mechanism, binds to mRNA upstream of the exon-junction complex (EJC) and is recruited in a splicing- and cap-dependent manner to a region near the 5' end of the mRNA where it functions in mRNA export to the cytoplasm via the TAP/NXF1 pathway. The THOC1-THOC2-THOC3 core complex alone is sufficient to promote ATPase activity of DDX39B; in the complex THOC2 is the only component that directly interacts with DDX39B. Associates with SARNP/CIP29, which facilitates RNA binding of DDX39B and likely plays a role in mRNA export. May undergo several rounds of ATP hydrolysis during assembly of TREX to drive subsequent loading of components such as ALYREF/THOC4 and CHTOP onto mRNA. Also associates with pre-mRNA independent of ALYREF/THOC4. Involved in the nuclear export of intronless mRNA; the ATP-bound form is proposed to recruit export adapter ALYREF/THOC4 to intronless mRNA; its ATPase activity is cooperatively stimulated by RNA and ALYREF/THOC4 and ATP hydrolysis is thought to trigger the dissociation from RNA to allow the association of ALYREF/THOC4 and the NXF1-NXT1 heterodimer. Involved in transcription elongation and genome stability. Splice factor that is required for the first ATP-dependent step in spliceosome assembly and for the interaction of U2 snRNP with the branchpoint. Has both RNA-stimulated ATP binding/hydrolysis activity and ATP-dependent RNA unwinding activity. Even with the stimulation of RNA, the ATPase activity is weak. Can only hydrolyze ATP but not other NTPs. The RNA stimulation of ATPase activity does not have a strong preference for the sequence and length of the RNA. However, ssRNA stimulates the ATPase activity much more strongly than dsRNA. Can unwind 5' or 3' overhangs or blunt end RNA duplexes in vitro. The ATPase and helicase activities are not influenced by U2AF2; the effect of ALYREF/THOC4 is reported conflictingly with [PubMed:23299939] reporting a stimulatory effect. Its function is as follows. (Microbial infection) The TREX complex is essential for the export of Kaposi's sarcoma-associated herpesvirus (KSHV) intronless mRNAs and infectious virus production. This is Spliceosome RNA helicase DDX39B from Homo sapiens (Human).